The sequence spans 377 residues: MVRQSIGLIALQLLNLVSVAQAATDAKRDLSEKPKMPYDPNTAADCTWWIDNDGSKNCEDIPEYWDIEMVDWLMWNPSLTLDCGNFLKGRSYCVEAKSVLPTQTSSSTATTTSQKPTATVSPLPQQDGLTKDCTKYYNVQSGDTCQKIVDQYMTFSLAEFNKWNPAVGPDCRSLFVGYYVCVGVPGTPTKPIGPSPTQPGIPKSCNKYYKADRGETCQGIADKHRLKLNDFYKWNPSVTNDCVGLWQGYYYCVGITPAFELKAFYHADCTGKLHGQTTIASGSDGACFDTNCQVASIDTFIVGDCPNGQVQISYWEQPGCTGKWFGYGYSSRGTCRKLWTEGWKFKAVHLRCASEKDDCVSKRTCTYDPEPSRGICM.

An N-terminal signal peptide occupies residues 1-22 (MVRQSIGLIALQLLNLVSVAQA). The segment covering 104–119 (TSSSTATTTSQKPTAT) has biased composition (low complexity). Residues 104–124 (TSSSTATTTSQKPTATVSPLP) are disordered. LysM domains are found at residues 135-182 (KYYN…YVCV) and 207-253 (KYYK…YYCV).

The protein belongs to the secreted LysM effector family.

Functionally, might have a role in sequestration of chitin oligosaccharides (breakdown products of fungal cell walls that are released during invasion and act as triggers of host immunity) to dampen host defense. The chain is Secreted LysM effector Lys2 from Pochonia chlamydosporia (strain 123) (Metacordyceps chlamydosporia).